We begin with the raw amino-acid sequence, 68 residues long: uncharacterized protein (68 aa).

Residues 1 to 20 are disordered; the sequence is MYKQKKKNHPFQCKKKKKKK. The chain crosses the membrane as a helical span at residues 27–44; the sequence is IKLLFNYFLFFNFIITTF.

Its subcellular location is the membrane. This is an uncharacterized protein from Dictyostelium discoideum (Social amoeba).